We begin with the raw amino-acid sequence, 105 residues long: MHGNVPTLPQYIIELIPQTEIDLQCHEQLNSSEDEDEDEVDHLQEQPQQARRDEQHPCYLIETQCCRCESLVQLAVQSSTKELRILQQMLMGTVELVCPLCATRR.

Residues 1 to 45 (MHGNVPTLPQYIIELIPQTEIDLQCHEQLNSSEDEDEDEVDHLQE) form an E7 terminal domain region. Residues 23–27 (LQCHE) carry the LXCXE motif; interaction with host RB1 and TMEM173/STING motif. Residues 30–53 (NSSEDEDEDEVDHLQEQPQQARRD) are disordered. A zinc finger spans residues 65–101 (CCRCESLVQLAVQSSTKELRILQQMLMGTVELVCPLC). A Nuclear export signal motif is present at residues 83-91 (LRILQQMLM).

It belongs to the papillomaviridae E7 protein family. Homodimer. Homooligomer. Interacts with host RB1; this interaction induces dissociation of RB1-E2F1 complex thereby disrupting RB1 activity. Interacts with host EP300; this interaction represses EP300 transcriptional activity. Interacts with protein E2; this interaction inhibits E7 oncogenic activity. Interacts with host TMEM173/STING; this interaction impairs the ability of TMEM173/STING to sense cytosolic DNA and promote the production of type I interferon (IFN-alpha and IFN-beta). Highly phosphorylated.

The protein resides in the host cytoplasm. Its subcellular location is the host nucleus. Its function is as follows. Plays a role in viral genome replication by driving entry of quiescent cells into the cell cycle. Stimulation of progression from G1 to S phase allows the virus to efficiently use the cellular DNA replicating machinery to achieve viral genome replication. E7 protein has both transforming and trans-activating activities. Induces the disassembly of the E2F1 transcription factor from RB1, with subsequent transcriptional activation of E2F1-regulated S-phase genes. Interferes with host histone deacetylation mediated by HDAC1 and HDAC2, leading to transcription activation. Also plays a role in the inhibition of both antiviral and antiproliferative functions of host interferon alpha. Interaction with host TMEM173/STING impairs the ability of TMEM173/STING to sense cytosolic DNA and promote the production of type I interferon (IFN-alpha and IFN-beta). The sequence is that of Protein E7 from Human papillomavirus type 53.